We begin with the raw amino-acid sequence, 357 residues long: DNA replication and repair protein RecF (357 aa).

Position 30–37 (30–37 (GPNGSGKT)) interacts with ATP.

It belongs to the RecF family.

Its subcellular location is the cytoplasm. The RecF protein is involved in DNA metabolism; it is required for DNA replication and normal SOS inducibility. RecF binds preferentially to single-stranded, linear DNA. It also seems to bind ATP. This is DNA replication and repair protein RecF from Vibrio campbellii (strain ATCC BAA-1116).